The chain runs to 352 residues: MTKLRVGLLFGGRSGEHEVSINSAKAIATALSASENATKYDILPVYIRKDGCWQAPDVAQQVLESAQPLSTPTDKSPQLWQFPPQVNQVDVWFPILHGPNGEDGTLQGLLTLMQVPYVGSGVLGSAVGMDKITMKTVFAKAGLPQVKYMTLSRGQIWSNPCIFPKLCDEIEETLNYPCFVKPANLGSSVGIAKVRSRSELEKALDQAASYDRRIIVEAGVIAREVECAVLGNDNPKASVVGEITFNSDFYDYETKYTDGRAQLLIPASVPDSIMTQIQEMSLAAFAAVDAAGLARVDFFYVEKTGEILINEINTLPGFTAFSMYPQLWAATGISFPQLVDRLIELALERHQR.

Positions 135 to 344 (KTVFAKAGLP…FPQLVDRLIE (210 aa)) constitute an ATP-grasp domain. 171-226 (EETLNYPCFVKPANLGSSVGIAKVRSRSELEKALDQAASYDRRIIVEAGVIAREVE) contacts ATP. The Mg(2+) site is built by Asp297, Glu311, and Asn313.

The protein belongs to the D-alanine--D-alanine ligase family. It depends on Mg(2+) as a cofactor. Mn(2+) is required as a cofactor.

Its subcellular location is the cytoplasm. The enzyme catalyses 2 D-alanine + ATP = D-alanyl-D-alanine + ADP + phosphate + H(+). The protein operates within cell wall biogenesis; peptidoglycan biosynthesis. Functionally, cell wall formation. The sequence is that of D-alanine--D-alanine ligase from Gloeothece citriformis (strain PCC 7424) (Cyanothece sp. (strain PCC 7424)).